The primary structure comprises 296 residues: 4-hydroxy-tetrahydrodipicolinate synthase (296 aa).

Residue T49 coordinates pyruvate. The active-site Proton donor/acceptor is the Y137. K165 (schiff-base intermediate with substrate) is an active-site residue. I207 lines the pyruvate pocket.

Belongs to the DapA family. Homotetramer; dimer of dimers.

Its subcellular location is the cytoplasm. The catalysed reaction is L-aspartate 4-semialdehyde + pyruvate = (2S,4S)-4-hydroxy-2,3,4,5-tetrahydrodipicolinate + H2O + H(+). Its pathway is amino-acid biosynthesis; L-lysine biosynthesis via DAP pathway; (S)-tetrahydrodipicolinate from L-aspartate: step 3/4. Catalyzes the condensation of (S)-aspartate-beta-semialdehyde [(S)-ASA] and pyruvate to 4-hydroxy-tetrahydrodipicolinate (HTPA). The sequence is that of 4-hydroxy-tetrahydrodipicolinate synthase from Afipia carboxidovorans (strain ATCC 49405 / DSM 1227 / KCTC 32145 / OM5) (Oligotropha carboxidovorans).